The following is a 393-amino-acid chain: S-adenosylmethionine synthase (393 aa).

Histidine 17 contributes to the ATP binding site. A Mg(2+)-binding site is contributed by aspartate 19. A K(+)-binding site is contributed by glutamate 45. Positions 58 and 106 each coordinate L-methionine. Residues 106–116 (QSAHIAQGVDA) are flexible loop. Residues 171 to 173 (DAK), 237 to 238 (KF), aspartate 246, 252 to 253 (RK), alanine 269, and lysine 273 contribute to the ATP site. Aspartate 246 lines the L-methionine pocket. Lysine 277 contributes to the L-methionine binding site.

The protein belongs to the AdoMet synthase family. As to quaternary structure, homotetramer; dimer of dimers. Mg(2+) is required as a cofactor. It depends on K(+) as a cofactor.

It localises to the cytoplasm. The catalysed reaction is L-methionine + ATP + H2O = S-adenosyl-L-methionine + phosphate + diphosphate. It functions in the pathway amino-acid biosynthesis; S-adenosyl-L-methionine biosynthesis; S-adenosyl-L-methionine from L-methionine: step 1/1. In terms of biological role, catalyzes the formation of S-adenosylmethionine (AdoMet) from methionine and ATP. The overall synthetic reaction is composed of two sequential steps, AdoMet formation and the subsequent tripolyphosphate hydrolysis which occurs prior to release of AdoMet from the enzyme. In Ruegeria sp. (strain TM1040) (Silicibacter sp.), this protein is S-adenosylmethionine synthase.